Reading from the N-terminus, the 169-residue chain is MNNKTNWVIIGRFGRPHGIKGFVTVHSFTDPADNILRYNDWHVFLNKQWQPLKLLTIEVRSKAIIAQIEGYPERELVSALTNLDIGVQESQLAALAPGEYYWYQLIGMSVINSKGDLFGKVVEIMPTGSNDVLVVEGEKRHLIPYLPGQFVINIDESQQVITVDWDMNF.

The PRC barrel domain maps to P97–F169.

This sequence belongs to the RimM family. Binds ribosomal protein uS19.

It localises to the cytoplasm. Functionally, an accessory protein needed during the final step in the assembly of 30S ribosomal subunit, possibly for assembly of the head region. Essential for efficient processing of 16S rRNA. May be needed both before and after RbfA during the maturation of 16S rRNA. It has affinity for free ribosomal 30S subunits but not for 70S ribosomes. This Legionella pneumophila (strain Paris) protein is Ribosome maturation factor RimM.